A 220-amino-acid chain; its full sequence is ATP-dependent Clp protease proteolytic subunit (220 aa).

S125 serves as the catalytic Nucleophile. Residue H150 is part of the active site.

This sequence belongs to the peptidase S14 family. In terms of assembly, fourteen ClpP subunits assemble into 2 heptameric rings which stack back to back to give a disk-like structure with a central cavity, resembling the structure of eukaryotic proteasomes.

Its subcellular location is the cytoplasm. The enzyme catalyses Hydrolysis of proteins to small peptides in the presence of ATP and magnesium. alpha-casein is the usual test substrate. In the absence of ATP, only oligopeptides shorter than five residues are hydrolyzed (such as succinyl-Leu-Tyr-|-NHMec, and Leu-Tyr-Leu-|-Tyr-Trp, in which cleavage of the -Tyr-|-Leu- and -Tyr-|-Trp bonds also occurs).. Cleaves peptides in various proteins in a process that requires ATP hydrolysis. Has a chymotrypsin-like activity. Plays a major role in the degradation of misfolded proteins. The chain is ATP-dependent Clp protease proteolytic subunit from Bacteroides fragilis (strain YCH46).